The chain runs to 365 residues: Baculoviral IAP repeat-containing protein 7 (365 aa).

BIR repeat units lie at residues 7–73 and 115–180; these read RQRS…PFLQ and RLGS…DFLL. Zn(2+) is bound by residues Cys-149, Cys-152, His-169, and Cys-176. The self-inhibits the anti-apoptotic function stretch occupies residues 186-234; that stretch reads AFIRSVQESFFSSPETSPESVGSYEGSPVSSPGSPPVCPFLSTSVAQGA. Position 198 is a phosphoserine (Ser-198). Residue Ser-202 is modified to Phosphoserine; by MAPK1. A Phosphoserine modification is found at Ser-212. A phosphoserine; by MAPK1 mark is found at Ser-216 and Ser-219. Residues 278-306 are disordered; sequence TESVSVPRAPTQRERPEPPKEPAPPLSTE. Residues 288–297 are compositionally biased toward basic and acidic residues; that stretch reads TQRERPEPPK. An RING-type zinc finger spans residues 318-353; the sequence is CKVCMDNDVSMVFVPCGHLVVCTECAPNLRHCPICR.

Belongs to the IAP family. Post-translationally, auto-ubiquitinated, and degraded in a 2-step mechanism; a caspase-independent first step and a caspase-dependent second step. In terms of processing, phosphorylated via MAPK-dependent and CDK-dependent pathways during oocyte maturation. Phosphorylation does not appear to affect caspase inhibition or autoubiquitination activity.

The protein resides in the cytoplasm. It carries out the reaction S-ubiquitinyl-[E2 ubiquitin-conjugating enzyme]-L-cysteine + [acceptor protein]-L-lysine = [E2 ubiquitin-conjugating enzyme]-L-cysteine + N(6)-ubiquitinyl-[acceptor protein]-L-lysine.. Its function is as follows. Weak apoptotic suppressor. Has E3 ubiquitin-protein ligase activity. Weak inhibitor of caspase activity. This Xenopus tropicalis (Western clawed frog) protein is Baculoviral IAP repeat-containing protein 7 (birc7).